Consider the following 352-residue polypeptide: Fe(3+) ions import ATP-binding protein FbpC (352 aa).

The ABC transporter domain maps to 5–239 (LHIGHLSKSF…PADLDAALFI (235 aa)). Residue 37-44 (GASGCGKT) participates in ATP binding.

This sequence belongs to the ABC transporter superfamily. Fe(3+) ion importer (TC 3.A.1.10) family. In terms of assembly, the complex is composed of two ATP-binding proteins (FbpC), two transmembrane proteins (FbpB) and a solute-binding protein (FbpA).

It is found in the cell inner membrane. The catalysed reaction is Fe(3+)(out) + ATP + H2O = Fe(3+)(in) + ADP + phosphate + H(+). Part of the ABC transporter complex FbpABC involved in Fe(3+) ions import. Responsible for energy coupling to the transport system. In Neisseria meningitidis serogroup A / serotype 4A (strain DSM 15465 / Z2491), this protein is Fe(3+) ions import ATP-binding protein FbpC.